Here is a 1081-residue protein sequence, read N- to C-terminus: Teashirt homolog 3 (1081 aa).

Disordered regions lie at residues 141–161 and 238–257; these read PSSE…SSCG and HYRD…WSKP. Positions 148 to 161 are enriched in low complexity; sequence GSSSSSSSSSSSCG. 2 C2H2-type zinc fingers span residues 214 to 238 and 275 to 299; these read FRCK…ETGH and LKCM…KTKH. A compositionally biased stretch (basic and acidic residues) spans 238–247; it reads HYRDDNHETD. The tract at residues 325-364 is disordered; it reads SLELELPSSPDSTGGTPKATISDTNDALQKNSNPYITPNN. Residues 335–364 show a composition bias toward polar residues; that stretch reads DSTGGTPKATISDTNDALQKNSNPYITPNN. The segment at 386 to 404 adopts a C2H2-type 3; atypical zinc-finger fold; that stretch reads LKCMECGSSHDTLQELTAH. Basic and acidic residues predominate over residues 473–491; the sequence is EVDKEKAVTDEKPKQKDKP. Disordered regions lie at residues 473-502, 579-604, 626-687, and 855-897; these read EVDK…DISS, NSEI…PMPK, EKMK…LAEP, and TESH…RQSN. The segment covering 581–603 has biased composition (polar residues); that stretch reads EIVSPTKNQTLVSPPSSQTSPMP. Residues 606–630 adopt a coiled-coil conformation; sequence NFHAMEELVKKVTEKVAKVEEKMKE. Ser682 carries the phosphoserine modification. The segment covering 856–869 has biased composition (low complexity); the sequence is ESHTSKSSTPSSIS. The homeobox; atypical DNA-binding region spans 891 to 961; it reads RKGRQSNWNP…NVKYQLRRTG (71 aa). C2H2-type zinc fingers lie at residues 976 to 998 and 1041 to 1064; these read FFCN…LESH and YQCK…SKTH.

The protein belongs to the teashirt C2H2-type zinc-finger protein family. As to quaternary structure, interacts (via homeobox domain) with APBB1 (via PID domain 1). Interacts (via N-terminus) with HDAC1 and HDAC2; the interaction is direct. Found in a trimeric complex with APBB1 and HDAC1; the interaction between HDAC1 and APBB1 is mediated by TSHZ3. In terms of tissue distribution, expressed in brain; strongly reduced in post-mortem elderly subjects with Alzheimer disease. Expressed in the fetal neocortex.

It is found in the nucleus. Its subcellular location is the cell projection. It localises to the growth cone. In terms of biological role, transcriptional regulator involved in developmental processes. Functions in association with APBB1, SET and HDAC factors as a transcriptional repressor, that inhibits the expression of CASP4. TSHZ3-mediated transcription repression involves the recruitment of histone deacetylases HDAC1 and HDAC2. Associates with chromatin in a region surrounding the CASP4 transcriptional start site(s). Regulates the development of neurons involved in both respiratory rhythm and airflow control. Promotes maintenance of nucleus ambiguus (nA) motoneurons, which govern upper airway function, and establishes a respiratory rhythm generator (RRG) activity compatible with survival at birth. Involved in the differentiation of the proximal uretic smooth muscle cells during developmental processes. Involved in the up-regulation of myocardin, that directs the expression of smooth muscle cells in the proximal ureter. Involved in the modulation of glutamatergic synaptic transmission and long-term synaptic potentiation. The sequence is that of Teashirt homolog 3 (TSHZ3) from Homo sapiens (Human).